A 348-amino-acid chain; its full sequence is tRNA N6-adenosine threonylcarbamoyltransferase (348 aa).

The Fe cation site is built by His-109 and His-113. Substrate is bound by residues 136-140 (TVSGG), Asp-169, Gly-182, Asp-186, and Asn-284. Asp-312 lines the Fe cation pocket.

The protein belongs to the KAE1 / TsaD family. It depends on Fe(2+) as a cofactor.

The protein resides in the cytoplasm. It carries out the reaction L-threonylcarbamoyladenylate + adenosine(37) in tRNA = N(6)-L-threonylcarbamoyladenosine(37) in tRNA + AMP + H(+). Functionally, required for the formation of a threonylcarbamoyl group on adenosine at position 37 (t(6)A37) in tRNAs that read codons beginning with adenine. Is involved in the transfer of the threonylcarbamoyl moiety of threonylcarbamoyl-AMP (TC-AMP) to the N6 group of A37, together with TsaE and TsaB. TsaD likely plays a direct catalytic role in this reaction. The polypeptide is tRNA N6-adenosine threonylcarbamoyltransferase (Chlorobium luteolum (strain DSM 273 / BCRC 81028 / 2530) (Pelodictyon luteolum)).